Here is a 1471-residue protein sequence, read N- to C-terminus: Myosin-4 (1471 aa).

The 54-residue stretch at 4–57 (EVGTKCWYPHKEQGWIGGEVTKNDFFEGTFHLELKLEDGETVSIETNSFENDDD) folds into the Myosin N-terminal SH3-like domain. The 707-residue stretch at 71 to 777 (ESTDDLTTLS…MLAFLEKLRT (707 aa)) folds into the Myosin motor domain. Position 165 to 172 (165 to 172 (GESGAGKT)) interacts with ATP. The interval 647-669 (LGELMAIINSTNVHYIRCIKPNS) is actin-binding. IQ domains follow at residues 781-801 (NEIC…LQYL), 804-824 (MESI…TRVD), 829-849 (TRAA…EYYR), 876-898 (MLMA…DYRT), and 899-928 (LKRS…EVEE). Residues 938 to 1063 (GLLEEAIEFK…LAFIENVIAQ (126 aa)) are a coiled coil. The 256-residue stretch at 1164-1419 (SKVLLTVESI…LNYLANVIKR (256 aa)) folds into the Dilute domain.

The protein belongs to the TRAFAC class myosin-kinesin ATPase superfamily. Myosin family. In terms of assembly, interacts with SHE2 and SHE3.

The protein resides in the bud. Part of the mRNA localization machinery that restricts accumulation of certain proteins to the bud and in the daughter cell. Recruited to specific mRNAs including the ASH1 mRNA, coding for a repressor of the HO endonuclease, via its interaction with SHE3. This Saccharomyces cerevisiae (strain ATCC 204508 / S288c) (Baker's yeast) protein is Myosin-4 (MYO4).